We begin with the raw amino-acid sequence, 160 residues long: SsrA-binding protein (160 aa).

The segment at 133-160 (KKEHDKREDLKEREWQRDKERMMKNKGR) is disordered.

This sequence belongs to the SmpB family.

Its subcellular location is the cytoplasm. Its function is as follows. Required for rescue of stalled ribosomes mediated by trans-translation. Binds to transfer-messenger RNA (tmRNA), required for stable association of tmRNA with ribosomes. tmRNA and SmpB together mimic tRNA shape, replacing the anticodon stem-loop with SmpB. tmRNA is encoded by the ssrA gene; the 2 termini fold to resemble tRNA(Ala) and it encodes a 'tag peptide', a short internal open reading frame. During trans-translation Ala-aminoacylated tmRNA acts like a tRNA, entering the A-site of stalled ribosomes, displacing the stalled mRNA. The ribosome then switches to translate the ORF on the tmRNA; the nascent peptide is terminated with the 'tag peptide' encoded by the tmRNA and targeted for degradation. The ribosome is freed to recommence translation, which seems to be the essential function of trans-translation. The polypeptide is SsrA-binding protein (Tolumonas auensis (strain DSM 9187 / NBRC 110442 / TA 4)).